Here is a 414-residue protein sequence, read N- to C-terminus: Stork-head box protein ham-1 (414 aa).

The interval 1 to 31 (MTYLAVVLNGPKAKNGRKVFDSFLEQNRQMF) is essential for association with cell cortex. A Winged helix Storkhead-box1 domain is found at 93 to 170 (QQVEQMHFVP…MADHYFVSVP (78 aa)). Residues 282–362 (ECQRKARRRN…SNEEAGSISD (81 aa)) form a disordered region. The interval 285–295 (RKARRRNHPRR) is bi-partite nuclear localization signal. A nuclear localization signal region spans residues 321–327 (PTRRRAR). A compositionally biased stretch (polar residues) spans 332 to 351 (LRSSTPNNSDSAYSISPPHT).

Its subcellular location is the cytoplasm. The protein resides in the cell cortex. It is found in the nucleus. Its function is as follows. Probable transcription factor. Required for asymmetric cell division in neuroblasts, perhaps acting by regulating spindle positioning and myosin polarization, and thus the position of the cleavage plane. Required to produce daughter cell size asymmetry in neuroblasts undergoing asymmetric cell division, usually giving rise to one precursor cell and one apoptotic cell. Positively modulates expression of the serine/threonine kinase pig-1/MELK during asymmetric division of the Q.a neuroblast. Plays a role in neural fate specification in several dopaminergic lineages, including the hermaphrodite-specific neuron (HSN)/phasmid neuron (PHB), acting in concert with the kinase, ham-1, and the T-box protein tbx-2 and the homeobox protein egl-5. This is Stork-head box protein ham-1 from Caenorhabditis elegans.